A 228-amino-acid polypeptide reads, in one-letter code: Tumor necrosis factor receptor superfamily member 18 (228 aa).

An N-terminal signal peptide occupies residues 1–19 (MGAWAMLYGVSMLCVLDLG). Over 20–153 (QPSVVEEPGC…EPLPTEQYGH (134 aa)) the chain is Extracellular. 3 TNFR-Cys repeats span residues 28–61 (GCGP…ERCI), 62–101 (CVTP…FRCV), and 102–142 (ACAM…AVCI). Intrachain disulfides connect C29–C44, C62–C74, C69–C82, C103–C122, and C116–C141. N-linked (GlcNAc...) asparagine glycosylation is found at N36 and N40. N-linked (GlcNAc...) asparagine glycosylation is found at N121 and N134. Residues 154–174 (LTVIFLVMAACIFFLTTVQLG) traverse the membrane as a helical segment. Residues 175-228 (LHIWQLRRQHMCPRETQPFAEVQLSAEDACSFQFPEEERGEQTEEKCHLGGRWP) lie on the Cytoplasmic side of the membrane.

As to quaternary structure, binds to TRAF1, TRAF2, and TRAF3, but not TRAF5 and TRAF6. Binds through its C-terminus to SIVA1/SIVA. As to expression, preferentially expressed in activated T lymphocytes.

The protein localises to the cell membrane. It is found in the secreted. Its function is as follows. Receptor for TNFSF18. Seems to be involved in interactions between activated T-lymphocytes and endothelial cells and in the regulation of T-cell receptor-mediated cell death. Mediated NF-kappa-B activation via the TRAF2/NIK pathway. In Mus musculus (Mouse), this protein is Tumor necrosis factor receptor superfamily member 18 (Tnfrsf18).